Here is a 345-residue protein sequence, read N- to C-terminus: UDP-3-O-acylglucosamine N-acyltransferase 3 (345 aa).

The Proton acceptor role is filled by histidine 236.

This sequence belongs to the transferase hexapeptide repeat family. LpxD subfamily. In terms of assembly, homotrimer.

The catalysed reaction is a UDP-3-O-[(3R)-3-hydroxyacyl]-alpha-D-glucosamine + a (3R)-hydroxyacyl-[ACP] = a UDP-2-N,3-O-bis[(3R)-3-hydroxyacyl]-alpha-D-glucosamine + holo-[ACP] + H(+). Its pathway is bacterial outer membrane biogenesis; LPS lipid A biosynthesis. In terms of biological role, catalyzes the N-acylation of UDP-3-O-acylglucosamine using 3-hydroxyacyl-ACP as the acyl donor. Is involved in the biosynthesis of lipid A, a phosphorylated glycolipid that anchors the lipopolysaccharide to the outer membrane of the cell. This Gloeobacter violaceus (strain ATCC 29082 / PCC 7421) protein is UDP-3-O-acylglucosamine N-acyltransferase 3.